Consider the following 329-residue polypeptide: L-threonine dehydratase catabolic TdcB (329 aa).

53–54 is a binding site for AMP; sequence RT. Residue lysine 58 is modified to N6-(pyridoxal phosphate)lysine. Residues glutamine 88, 119–120, and asparagine 314 each bind AMP; that span reads DY.

It belongs to the serine/threonine dehydratase family. As to quaternary structure, in the native structure, TdcB is in a dimeric form, whereas in the TdcB-AMP complex, it exists in a tetrameric form (dimer of dimers). Requires pyridoxal 5'-phosphate as cofactor.

The enzyme catalyses L-threonine = 2-oxobutanoate + NH4(+). It catalyses the reaction L-serine = pyruvate + NH4(+). The protein operates within amino-acid degradation; L-threonine degradation via propanoate pathway; propanoate from L-threonine: step 1/4. With respect to regulation, each protein molecule can bind up to four molecules of AMP, which act as an allosteric activator to the enzyme. Catalyzes the anaerobic formation of alpha-ketobutyrate and ammonia from threonine in a two-step reaction. The first step involved a dehydration of threonine and a production of enamine intermediates (aminocrotonate), which tautomerizes to its imine form (iminobutyrate). Both intermediates are unstable and short-lived. The second step is the nonenzymatic hydrolysis of the enamine/imine intermediates to form 2-ketobutyrate and free ammonia. In the low water environment of the cell, the second step is accelerated by RidA. TdcB also dehydrates serine to yield pyruvate via analogous enamine/imine intermediates. The polypeptide is L-threonine dehydratase catabolic TdcB (tdcB) (Escherichia coli O157:H7).